Consider the following 762-residue polypeptide: Primary amine oxidase, lung isozyme (762 aa).

An N-terminal signal peptide occupies residues 1-16 (MFIFIFLSLWTLLVMG). The tract at residues 23 to 54 (GSEEGVGKQCHPSLPPRCPSRSPSDQPWTHPD) is disordered. N-linked (GlcNAc...) asparagine glycosylation occurs at asparagine 136. The cysteines at positions 197 and 198 are disulfide-linked. Threonine 211 is a glycosylation site (O-linked (GalNAc...) threonine). N-linked (GlcNAc...) asparagine glycans are attached at residues asparagine 231 and asparagine 293. 383 to 393 (YMDACFGMGKF) is a substrate binding site. Aspartate 385 acts as the Proton acceptor in catalysis. A disulfide bridge links cysteine 403 with cysteine 429. 467-472 (LLNYDY) contacts substrate. Catalysis depends on tyrosine 470, which acts as the Schiff-base intermediate with substrate; via topaquinone. Tyrosine 470 is subject to 2',4',5'-topaquinone. Histidine 519 and histidine 521 together coordinate Cu cation. 4 residues coordinate Ca(2+): aspartate 528, leucine 529, aspartate 530, and glutamate 571. Residue 577–584 (PLGGGSPR) participates in heparin binding. Residue asparagine 617 is glycosylated (N-linked (GlcNAc...) asparagine). Ca(2+) contacts are provided by phenylalanine 662 and asparagine 664. Asparagine 665 carries an N-linked (GlcNAc...) asparagine glycan. 3 residues coordinate Ca(2+): glutamate 666, aspartate 672, and leucine 673. Residue histidine 683 coordinates Cu cation. A disulfide bond links cysteine 733 and cysteine 740.

This sequence belongs to the copper/topaquinone oxidase family. In terms of assembly, homodimer; disulfide-linked. Requires Cu cation as cofactor. Ca(2+) serves as cofactor. The cofactor is L-topaquinone. Topaquinone (TPQ) is generated by copper-dependent autoxidation of a specific tyrosyl residue. In terms of tissue distribution, expressed in lung, spleen, heart and kidney.

It localises to the secreted. Its subcellular location is the extracellular space. The catalysed reaction is a primary methyl amine + O2 + H2O = an aldehyde + H2O2 + NH4(+). This chain is Primary amine oxidase, lung isozyme, found in Bos taurus (Bovine).